Here is an 86-residue protein sequence, read N- to C-terminus: UPF0335 protein BR1752/BS1330_I1746 (86 aa).

Belongs to the UPF0335 family.

The protein is UPF0335 protein BR1752/BS1330_I1746 of Brucella suis biovar 1 (strain 1330).